The following is an 805-amino-acid chain: Angiotensin-converting enzyme 2 (805 aa).

Residues 1-17 (MSSSSWLLLSLVAVTAA) form the signal peptide. Residues 18 to 740 (QSTIEEQAKT…LGPPNQPPVS (723 aa)) are Extracellular-facing. The Peptidase M2 domain occupies 19–607 (STIEEQAKTF…QNKNSFVGWS (589 aa)). The interaction with SARS-CoV spike glycoprotein stretch occupies residues 30 to 41 (DKFNHEAEDLFY). N-linked (GlcNAc...) asparagine glycosylation is present at Asn53. Residues 82–84 (MYP) are interaction with SARS-CoV spike glycoprotein. Asn90 and Asn103 each carry an N-linked (GlcNAc...) asparagine glycan. A disulfide bond links Cys133 and Cys141. Arg169 contacts chloride. Residue Arg273 coordinates substrate. N-linked (GlcNAc...) asparagine glycosylation occurs at Asn322. A disulfide bridge connects residues Cys344 and Cys361. Position 345–346 (345–346 (HP)) interacts with substrate. The interval 353 to 357 (KGDFR) is interaction with SARS-CoV spike glycoprotein. Zn(2+) is bound at residue His374. Catalysis depends on Glu375, which acts as the Proton acceptor. The Zn(2+) site is built by His378 and Glu402. Asn432 is a glycosylation site (N-linked (GlcNAc...) asparagine). Residues Trp477 and Lys481 each contribute to the chloride site. The active-site Proton donor is the His505. Tyr515 is a substrate binding site. A disulfide bond links Cys530 and Cys542. N-linked (GlcNAc...) asparagine glycosylation is present at Asn546. The Collectrin-like domain occupies 614-805 (ADQSIKVRIS…QNTDDVQTSF (192 aa)). The tract at residues 652 to 659 (RQYFLKVK) is essential for cleavage by ADAM17. Asn690 is a glycosylation site (N-linked (GlcNAc...) asparagine). The tract at residues 697–716 (RTEVEKAIRMSRSRINDAFR) is essential for cleavage by TMPRSS11D and TMPRSS2. Residues 741 to 761 (IWLIVFGVVMGVIVVGIVILI) traverse the membrane as a helical segment. The Cytoplasmic segment spans residues 762-805 (FTGIRDRKKKNKARSGENPYASIDISKGENNPGFQNTDDVQTSF). The tract at residues 772 to 805 (NKARSGENPYASIDISKGENNPGFQNTDDVQTSF) is disordered. Positions 778–786 (ENPYASIDI) match the LIR motif. A Phosphotyrosine modification is found at Tyr781. The Endocytic sorting signal signature appears at 781-784 (YASI). The SH2-binding motif lies at 781–785 (YASID). Position 783 is a phosphoserine (Ser783). Residue Lys788 forms a Glycyl lysine isopeptide (Lys-Gly) (interchain with G-Cter in ubiquitin) linkage. Positions 789 to 805 (GENNPGFQNTDDVQTSF) are enriched in polar residues. A PTB motif is present at residues 792–795 (NPGF). The short motif at 803–805 (TSF) is the PDZ-binding element.

This sequence belongs to the peptidase M2 family. As to quaternary structure, homodimer. Interacts with the catalytically active form of TMPRSS2. Interacts with SLC6A19; this interaction is essential for expression and function of SLC6A19 in intestine. Interacts with ITGA5:ITGB1. Probably interacts (via endocytic sorting signal motif) with AP2M1; the interaction is inhibited by phosphorylation of Tyr-781. Interacts (via PDZ-binding motif) with NHERF1 (via PDZ domains); the interaction may enhance ACE2 membrane residence. (Microbial infection) Interacts with SARS coronavirus/SARS-CoV spike protein. In terms of assembly, (Microbial infection) Interacts with SARS coronavirus-2/SARS-CoV-2 spike protein (via RBD domain). As to quaternary structure, (Microbial infection) Interacts with human coronavirus NL63 spike protein. (Microbial infection) Interacts with human coronavirus NL63/HCoV-NL63 spike glycoprotein. In terms of assembly, (Microbial infection) Interacts with SARS coronavirus-2/SARS-CoV-2 spike protein; the interaction is increased by AVP/Arg-vasopressin with which they may form a complex. Zn(2+) serves as cofactor. The cofactor is chloride. Post-translationally, N-glycosylation on Asn-90 may limit SARS infectivity. In terms of processing, proteolytic cleavage by ADAM17 generates a secreted form. Also cleaved by serine proteases: TMPRSS2, TMPRSS11D and HPN/TMPRSS1. Phosphorylated. Phosphorylation at Tyr-781 probably inhibits interaction with AP2M1 and enables interactions with proteins containing SH2 domains. Post-translationally, ubiquitinated. Ubiquitinated on Lys-788 via 'Lys-48'-linked ubiquitin. 'Lys-48'-linked deubiquitinated by USP50 on the Lys-788; leading to its stabilization. As to expression, expressed in endothelial cells from small and large arteries, and in arterial smooth muscle cells (at protein level). Expressed in enterocytes of the small intestine, Leydig cells and Sertoli cells (at protein level). Expressed in the renal proximal tubule and the small intestine (at protein level). Expressed in heart, kidney, testis, and gastrointestinal system (at protein level). In lung, expressed at low levels in some alveolar type 2 cells, the expression seems to be individual-specific (at protein level). Expressed in nasal epithelial cells (at protein level). Coexpressed with TMPRSS2 within some lung alveolar type 2 cells, ileal absorptive enterocytes, intestinal epithelial cells, cornea, gallbladder and nasal goblet secretory cells. Coexpressed with TMPRSS4 within mature enterocytes. In terms of tissue distribution, expressed in nasal and bronchial epithelial cells (at protein level).

It localises to the secreted. Its subcellular location is the cell membrane. The protein resides in the cytoplasm. The protein localises to the cell projection. It is found in the cilium. It localises to the apical cell membrane. The enzyme catalyses angiotensin II + H2O = angiotensin-(1-7) + L-phenylalanine. It carries out the reaction angiotensin I + H2O = angiotensin-(1-9) + L-leucine. The catalysed reaction is bradykinin(1-8) + H2O = bradykinin(1-7) + L-phenylalanine. It catalyses the reaction neurotensin + H2O = neurotensin-(1-12) + L-leucine. The enzyme catalyses neurotensin-(1-8) + H2O = neurotensin-(1-7) + L-arginine. It carries out the reaction kinetensin + H2O = kinetensin-(1-8) + L-leucine. The catalysed reaction is dynorphin A-(1-13) + H2O = dynorphin A-(1-12) + L-lysine. It catalyses the reaction apelin-13 + H2O = apelin-12 + L-phenylalanine. The enzyme catalyses [Pyr1]apelin-13 + H2O = [Pyr1]apelin-12 + L-phenylalanine. It carries out the reaction apelin-17 + H2O = apelin-16 + L-phenylalanine. The catalysed reaction is beta-casomorphin-7 + H2O = beta-casomorphin-6 + L-isoleucine. It catalyses the reaction neocasomorphin + H2O = neocasomorphin-(1-5) + L-isoleucine. Its activity is regulated as follows. Regulated by chloride and fluoride, but not bromide. Chloride increases angiotensin I and decreases angiotensin II cleavage. Inhibited by MLN-4760, cFP_Leu, and EDTA, but not by the ACE inhibitors lisinopril, captopril and enalaprilat. Highly potent and selective in vitro ACE2 inhibitors were identified. Its function is as follows. Essential counter-regulatory carboxypeptidase of the renin-angiotensin hormone system that is a critical regulator of blood volume, systemic vascular resistance, and thus cardiovascular homeostasis. Converts angiotensin I to angiotensin 1-9, a nine-amino acid peptide with anti-hypertrophic effects in cardiomyocytes, and angiotensin II to angiotensin 1-7, which then acts as a beneficial vasodilator and anti-proliferation agent, counterbalancing the actions of the vasoconstrictor angiotensin II. Also removes the C-terminal residue from three other vasoactive peptides, neurotensin, kinetensin, and des-Arg bradykinin, but is not active on bradykinin. Also cleaves other biological peptides, such as apelins (apelin-13, [Pyr1]apelin-13, apelin-17, apelin-36), casomorphins (beta-casomorphin-7, neocasomorphin) and dynorphin A with high efficiency. In addition, ACE2 C-terminus is homologous to collectrin and is responsible for the trafficking of the neutral amino acid transporter SL6A19 to the plasma membrane of gut epithelial cells via direct interaction, regulating its expression on the cell surface and its catalytic activity. (Microbial infection) Acts as a receptor for human coronaviruses SARS-CoV and SARS-CoV-2, as well as human coronavirus NL63/HCoV-NL63. In terms of biological role, non-functional as a carboxypeptidase. Functionally, (Microbial infection) Non-functional as a receptor for human coronavirus SARS-CoV-2. In Homo sapiens (Human), this protein is Angiotensin-converting enzyme 2.